The sequence spans 475 residues: MYKVAKASQYLVITGIGIKDIKLAKKAWILPGQSYSVFDLSPVNYTFEVQAMSAEKLPFVLPAVFTIGPRVDDKESLLKYAKLISPHDKLSNHVKELVQGIIEGETRVLAASMTMEEVFRGTKEFKQEVFGKVQLELNQFGLLIYNANVKQLVDVPGHEYFSYLGQKTQMEAANQARVDVSEAKMKGEIGSKLREGQTLQNAAKIDAETKIIAMQRAGEGDKEGIKVRTEVKVFENQREAEVAEANSELAKKKAAWTKAAQVAEVEAAKAVALRDAELQGEVERMNALTTTEKLKAEFLSKASVQYETKVQEANWELYKKQKEAEAILYEKKAEAEAQKALADATFYARTQAAEAELYAKKKEAEGIVTLGNAQGVYLSALLNALGNNYTAVRDFLMINGGMFQEIAKINAEAVRGLEPKISIWTNGGDNSGGEGAMKEVAGVYKMLPPLFKTVHEQTGMLPPAWMGVLPDKNLN.

Coiled-coil stretches lie at residues 235-255 (ENQR…KKAA) and 305-325 (QYET…KEAE).

It belongs to the band 7/mec-2 family. Flotillin subfamily. Expressed in roots and nodules. Primarily expressed in vascular tissues. Upon induction of nodulation, expansion of expression in the root cortex in the region of elongating root hairs, which will eventually become colonized by bacteria. Expressed in the infection zone in nodules.

It is found in the membrane. The protein resides in the caveola. Its subcellular location is the cell membrane. Functionally, may act as a scaffolding protein within caveolar membranes, functionally participating in formation of caveolae or caveolae-like vesicles. Required for normal infection threads initiation and elongation and nodulation. Probably involved in polar growth of the infection thread. This chain is Flotillin-like protein 4 (FLOT4), found in Medicago truncatula (Barrel medic).